The chain runs to 397 residues: Argininosuccinate synthase (397 aa).

8–16 (AYSGGLDTS) serves as a coordination point for ATP. Residues tyrosine 86 and serine 91 each contribute to the L-citrulline site. Glycine 116 provides a ligand contact to ATP. Positions 118, 122, and 123 each coordinate L-aspartate. Asparagine 122 serves as a coordination point for L-citrulline. L-citrulline is bound by residues arginine 126, serine 175, serine 184, glutamate 260, and tyrosine 272.

It belongs to the argininosuccinate synthase family. Type 1 subfamily. In terms of assembly, homotetramer.

Its subcellular location is the cytoplasm. The enzyme catalyses L-citrulline + L-aspartate + ATP = 2-(N(omega)-L-arginino)succinate + AMP + diphosphate + H(+). Its pathway is amino-acid biosynthesis; L-arginine biosynthesis; L-arginine from L-ornithine and carbamoyl phosphate: step 2/3. The chain is Argininosuccinate synthase from Clostridium botulinum (strain Okra / Type B1).